A 182-amino-acid chain; its full sequence is Large ribosomal subunit protein uL10 (182 aa).

It belongs to the universal ribosomal protein uL10 family. In terms of assembly, part of the ribosomal stalk of the 50S ribosomal subunit. The N-terminus interacts with L11 and the large rRNA to form the base of the stalk. The C-terminus forms an elongated spine to which L12 dimers bind in a sequential fashion forming a multimeric L10(L12)X complex.

Forms part of the ribosomal stalk, playing a central role in the interaction of the ribosome with GTP-bound translation factors. The polypeptide is Large ribosomal subunit protein uL10 (Parafrankia sp. (strain EAN1pec)).